We begin with the raw amino-acid sequence, 176 residues long: Nascent polypeptide-associated complex subunit alpha (176 aa).

An NAC-A/B domain is found at 14-78; it reads SKNEKKAREL…AKVDDFTQRL (65 aa). Positions 85-127 are disordered; sequence LQQNEGVLPAGQDAVSKDPQSIQADMQAAADSATDKPSADDAV. The 40-residue stretch at 137-176 folds into the UBA domain; sequence LNADDIELVMQQAGVPRAKAAKALKEHDSDIVNAIMALSG.

Belongs to the NAC-alpha family. Part of the nascent polypeptide-associated complex (NAC), consisting of EGD2 and EGD1. NAC associates with ribosomes via EGD1.

It is found in the cytoplasm. It localises to the nucleus. Component of the nascent polypeptide-associated complex (NAC), a dynamic component of the ribosomal exit tunnel, protecting the emerging polypeptides from interaction with other cytoplasmic proteins to ensure appropriate nascent protein targeting. The NAC complex also promotes mitochondrial protein import by enhancing productive ribosome interactions with the outer mitochondrial membrane and blocks the inappropriate interaction of ribosomes translating non-secretory nascent polypeptides with translocation sites in the membrane of the endoplasmic reticulum. EGD2 may also be involved in transcription regulation. The sequence is that of Nascent polypeptide-associated complex subunit alpha (EGD2) from Kluyveromyces lactis (strain ATCC 8585 / CBS 2359 / DSM 70799 / NBRC 1267 / NRRL Y-1140 / WM37) (Yeast).